We begin with the raw amino-acid sequence, 503 residues long: Na(+)-translocating NADH-quinone reductase subunit B (503 aa).

4 helical membrane-spanning segments follow: residues 55-75, 120-142, 161-181, and 186-206; these read MILV…NSGV, IFLP…FAVI, TLPP…GVVV, and FGGT…FLFF. An FMN phosphoryl threonine modification is found at threonine 248. Helical transmembrane passes span 361–381, 387–407, 417–437, 452–472, and 475–495; these read TSTF…IASW, FGIG…LIVG, FFIP…LVFM, WIYG…NPAY, and GVML…YFAV.

This sequence belongs to the NqrB/RnfD family. Composed of six subunits; NqrA, NqrB, NqrC, NqrD, NqrE and NqrF. Requires FMN as cofactor.

It localises to the cell inner membrane. It catalyses the reaction a ubiquinone + n Na(+)(in) + NADH + H(+) = a ubiquinol + n Na(+)(out) + NAD(+). NQR complex catalyzes the reduction of ubiquinone-1 to ubiquinol by two successive reactions, coupled with the transport of Na(+) ions from the cytoplasm to the periplasm. NqrA to NqrE are probably involved in the second step, the conversion of ubisemiquinone to ubiquinol. In Chlamydia felis (strain Fe/C-56) (Chlamydophila felis), this protein is Na(+)-translocating NADH-quinone reductase subunit B.